The primary structure comprises 224 residues: UPF0758 protein HEAR2468 (224 aa).

The MPN domain maps to 102-224 (ALNSPQAVKQ…VYSFAEQGQL (123 aa)). The Zn(2+) site is built by H173, H175, and D186. Positions 173-186 (HNHPSGTPEPSAAD) match the JAMM motif motif.

It belongs to the UPF0758 family.

The sequence is that of UPF0758 protein HEAR2468 from Herminiimonas arsenicoxydans.